A 426-amino-acid polypeptide reads, in one-letter code: D-amino acid dehydrogenase (426 aa).

FAD is bound at residue 3-17 (VVVLGAGVIGVTTAW).

Belongs to the DadA oxidoreductase family. Requires FAD as cofactor.

The catalysed reaction is a D-alpha-amino acid + A + H2O = a 2-oxocarboxylate + AH2 + NH4(+). It functions in the pathway amino-acid degradation; D-alanine degradation; NH(3) and pyruvate from D-alanine: step 1/1. Functionally, oxidative deamination of D-amino acids. In Phenylobacterium zucineum (strain HLK1), this protein is D-amino acid dehydrogenase.